Reading from the N-terminus, the 257-residue chain is 3-methyl-2-oxobutanoate hydroxymethyltransferase (257 aa).

The Mg(2+) site is built by Asp42 and Asp86. Residues 42-43 (DS), Asp86, and Lys116 each bind 3-methyl-2-oxobutanoate. Residue Glu118 coordinates Mg(2+). The active-site Proton acceptor is the Glu185.

This sequence belongs to the PanB family. Homodecamer; pentamer of dimers. Mg(2+) serves as cofactor.

It localises to the cytoplasm. The enzyme catalyses 3-methyl-2-oxobutanoate + (6R)-5,10-methylene-5,6,7,8-tetrahydrofolate + H2O = 2-dehydropantoate + (6S)-5,6,7,8-tetrahydrofolate. Its pathway is cofactor biosynthesis; (R)-pantothenate biosynthesis; (R)-pantoate from 3-methyl-2-oxobutanoate: step 1/2. Its function is as follows. Catalyzes the reversible reaction in which hydroxymethyl group from 5,10-methylenetetrahydrofolate is transferred onto alpha-ketoisovalerate to form ketopantoate. This Prochlorococcus marinus (strain MIT 9215) protein is 3-methyl-2-oxobutanoate hydroxymethyltransferase.